The primary structure comprises 310 residues: Ribosomal RNA small subunit methyltransferase H (310 aa).

S-adenosyl-L-methionine-binding positions include 40-42 (GGH), aspartate 59, phenylalanine 89, aspartate 104, and glutamine 111.

The protein belongs to the methyltransferase superfamily. RsmH family.

Its subcellular location is the cytoplasm. The catalysed reaction is cytidine(1402) in 16S rRNA + S-adenosyl-L-methionine = N(4)-methylcytidine(1402) in 16S rRNA + S-adenosyl-L-homocysteine + H(+). Specifically methylates the N4 position of cytidine in position 1402 (C1402) of 16S rRNA. The polypeptide is Ribosomal RNA small subunit methyltransferase H (Amoebophilus asiaticus (strain 5a2)).